The primary structure comprises 378 residues: Lipid-A-disaccharide synthase (378 aa).

Belongs to the LpxB family.

The catalysed reaction is a lipid X + a UDP-2-N,3-O-bis[(3R)-3-hydroxyacyl]-alpha-D-glucosamine = a lipid A disaccharide + UDP + H(+). The protein operates within bacterial outer membrane biogenesis; LPS lipid A biosynthesis. In terms of biological role, condensation of UDP-2,3-diacylglucosamine and 2,3-diacylglucosamine-1-phosphate to form lipid A disaccharide, a precursor of lipid A, a phosphorylated glycolipid that anchors the lipopolysaccharide to the outer membrane of the cell. The polypeptide is Lipid-A-disaccharide synthase (Pseudomonas aeruginosa (strain LESB58)).